Reading from the N-terminus, the 94-residue chain is Acylphosphatase (94 aa).

In terms of domain architecture, Acylphosphatase-like spans 7 to 94 (AALVRITGRV…EAPAGFRITR (88 aa)). Active-site residues include arginine 22 and asparagine 40.

This sequence belongs to the acylphosphatase family.

The catalysed reaction is an acyl phosphate + H2O = a carboxylate + phosphate + H(+). This Sinorhizobium medicae (strain WSM419) (Ensifer medicae) protein is Acylphosphatase (acyP).